The primary structure comprises 386 residues: All-trans-retinol dehydrogenase [NAD(+)] ADH7 (386 aa).

Residue Cys-59 coordinates Zn(2+). 60-64 is a binding site for NAD(+); that stretch reads RTDDH. Positions 80, 110, 113, 116, 124, and 186 each coordinate Zn(2+). NAD(+)-binding positions include 211–216, Asp-235, Lys-240, 281–283, 304–306, 329–331, and Arg-381; these read GLGGVG, IGH, VGV, and CVF.

Belongs to the zinc-containing alcohol dehydrogenase family. Class-IV subfamily. As to quaternary structure, homodimer. It depends on Zn(2+) as a cofactor. Preferentially expressed in stomach.

Its subcellular location is the cytoplasm. The enzyme catalyses a primary alcohol + NAD(+) = an aldehyde + NADH + H(+). It carries out the reaction 10-hydroxydecanoate + NAD(+) = 10-oxodecanoate + NADH + H(+). It catalyses the reaction all-trans-retinol + NAD(+) = all-trans-retinal + NADH + H(+). The catalysed reaction is 9-cis-retinol + NAD(+) = 9-cis-retinal + NADH + H(+). The enzyme catalyses all-trans-3,4-didehydroretinol + NAD(+) = all-trans-3,4-didehydroretinal + NADH + H(+). It carries out the reaction all-trans-4-hydroxyretinol + NAD(+) = all-trans-4-hydroxyretinal + NADH + H(+). It catalyses the reaction all-trans-4-oxoretinol + NAD(+) = all-trans-4-oxoretinal + NADH + H(+). The catalysed reaction is 12-hydroxydodecanoate + NAD(+) = 12-oxododecanoate + NADH + H(+). The enzyme catalyses 16-hydroxyhexadecanoate + NAD(+) = 16-oxohexadecanoate + NADH + H(+). It carries out the reaction hexan-1-ol + NAD(+) = hexanal + NADH + H(+). It catalyses the reaction (E)-hex-2-en-1-ol + NAD(+) = (E)-hex-2-enal + NADH + H(+). The catalysed reaction is (E)-4-hydroxynon-2-en-1-ol + NAD(+) = (E)-4-hydroxynon-2-enal + NADH + H(+). Its activity is regulated as follows. Retinol oxidation is inhibited by the detergent Tween 80. Ethanol inhibits both all-trans-retinol and 9-cis-retinol oxidation. 13-cis-retinol is an effective competitive inhibitor of the 9-cis-retinol oxidation. All-trans-retinoic acid is a powerful inhibitor of all-trans-retinol oxidation. 13-cis-retinoic acid is a powerful inhibitor of all-trans-retinol oxidation. Cimetidine competitively inhibited ethanol oxidation. In terms of biological role, catalyzes the NAD-dependent oxidation of all-trans-retinol, alcohol, and omega-hydroxy fatty acids and their derivatives. Oxidizes preferentially all trans-retinol, all-trans-4-hydroxyretinol, 9-cis-retinol, 2-hexenol, and long chain omega-hydroxy fatty acids such as juniperic acid. In vitro can also catalyze the NADH-dependent reduction of all-trans-retinal and aldehydes and their derivatives. Reduces preferentially all trans-retinal, all-trans-4-oxoretinal and hexanal. Catalyzes in the oxidative direction with higher efficiency. Therefore may participate in retinoid metabolism, fatty acid omega-oxidation, and elimination of cytotoxic aldehydes produced by lipid peroxidation. In Homo sapiens (Human), this protein is All-trans-retinol dehydrogenase [NAD(+)] ADH7.